A 388-amino-acid polypeptide reads, in one-letter code: Oligogalacturonate lyase (388 aa).

It localises to the periplasm. The catalysed reaction is 4-(4-deoxy-alpha-D-galact-4-enuronosyl)-D-galacturonate = 2 5-dehydro-4-deoxy-D-glucuronate. The protein operates within glycan metabolism; pectin degradation; 2-dehydro-3-deoxy-D-gluconate from pectin: step 3/5. Its function is as follows. Involved in degradation of pectin, which causes soft-rod disease in plants. This is Oligogalacturonate lyase (ogl) from Dickeya dadantii (strain 3937) (Erwinia chrysanthemi (strain 3937)).